A 431-amino-acid chain; its full sequence is Dihydroorotase (431 aa).

Zn(2+) contacts are provided by H59 and H61. Residues 61-63 (HLR) and N93 contribute to the substrate site. Zn(2+) is bound by residues D151, H178, H231, and D304. Residue D304 is part of the active site. Substrate-binding positions include H308 and 322–323 (FG).

Belongs to the metallo-dependent hydrolases superfamily. DHOase family. Class I DHOase subfamily. Zn(2+) serves as cofactor.

The catalysed reaction is (S)-dihydroorotate + H2O = N-carbamoyl-L-aspartate + H(+). Its pathway is pyrimidine metabolism; UMP biosynthesis via de novo pathway; (S)-dihydroorotate from bicarbonate: step 3/3. In terms of biological role, catalyzes the reversible cyclization of carbamoyl aspartate to dihydroorotate. The protein is Dihydroorotase of Thermoanaerobacter sp. (strain X514).